The following is a 427-amino-acid chain: Type II methyltransferase M1.BsuMI (427 aa).

Residues 84–427 (INIADLFSGC…SYLLALHQLR (344 aa)) enclose the SAM-dependent MTase C5-type domain. The active site involves cysteine 176.

This sequence belongs to the class I-like SAM-binding methyltransferase superfamily. C5-methyltransferase family. In terms of assembly, monomer. May form a complex with YdiP, also seems to be active alone.

The catalysed reaction is a 2'-deoxycytidine in DNA + S-adenosyl-L-methionine = a 5-methyl-2'-deoxycytidine in DNA + S-adenosyl-L-homocysteine + H(+). Somewhat inhibited by MgCl(2) and spermidine, strongly inhibited by MnCl(2). Functionally, a methylase, recognizes the double-stranded sequence 5'-YTCGAR-3', methylates C-3 on both strands, and protects the DNA from cleavage by the BsuMI endonuclease. The protein is Type II methyltransferase M1.BsuMI (ydiO) of Bacillus subtilis (strain 168).